The chain runs to 181 residues: Protein GrpE (181 aa).

It belongs to the GrpE family. As to quaternary structure, homodimer.

The protein localises to the cytoplasm. In terms of biological role, participates actively in the response to hyperosmotic and heat shock by preventing the aggregation of stress-denatured proteins, in association with DnaK and GrpE. It is the nucleotide exchange factor for DnaK and may function as a thermosensor. Unfolded proteins bind initially to DnaJ; upon interaction with the DnaJ-bound protein, DnaK hydrolyzes its bound ATP, resulting in the formation of a stable complex. GrpE releases ADP from DnaK; ATP binding to DnaK triggers the release of the substrate protein, thus completing the reaction cycle. Several rounds of ATP-dependent interactions between DnaJ, DnaK and GrpE are required for fully efficient folding. In Leptothrix cholodnii (strain ATCC 51168 / LMG 8142 / SP-6) (Leptothrix discophora (strain SP-6)), this protein is Protein GrpE.